Reading from the N-terminus, the 554-residue chain is MFS-type transporter tstD (554 aa).

Polar residues-rich tracts occupy residues 1–10 (MPEPFNSTMP) and 27–38 (QDSNQPPEMSAS). Residues 1-68 (MPEPFNSTMP…ESENNEPYSV (68 aa)) form a disordered region. N-linked (GlcNAc...) asparagine glycosylation occurs at N6. Positions 39 to 48 (SEKKHPENEN) are enriched in basic and acidic residues. A helical membrane pass occupies residues 76 to 96 (LMVLAASLAGFFSPLSASIYY). N107 and N114 each carry an N-linked (GlcNAc...) asparagine glycan. The next 5 membrane-spanning stretches (helical) occupy residues 115–135 (LTVT…ASFS), 142–162 (PGYA…ALQN), 173–193 (LQSA…SDII), 202–222 (IAFA…IGGL), and 231–251 (WIFW…FLFF). The interval 281–300 (KEKQRQQRAENEEENANRQR) is disordered. 3 consecutive transmembrane segments (helical) span residues 311–331 (VFVV…GVAF), 354–374 (IKVA…ALST), and 413–433 (IALP…WLMT). A glycan (N-linked (GlcNAc...) asparagine) is linked at N437. A run of 3 helical transmembrane segments spans residues 442–462 (IILL…LNVL), 473–493 (MVTA…AAMI), and 504–524 (WSYT…LLTM).

The protein belongs to the major facilitator superfamily.

The protein localises to the membrane. In terms of biological role, MFS-type transporter; part of the gene cluster that mediates the biosynthesis of the antihypercholesterolemic agents phomoidrides which are dimeric anhydrides. The chain is MFS-type transporter tstD from Talaromyces stipitatus (strain ATCC 10500 / CBS 375.48 / QM 6759 / NRRL 1006) (Penicillium stipitatum).